The sequence spans 282 residues: Protein-glutamine deamidase Cif (282 aa).

The translocation domain (TD) stretch occupies residues 1–16 (MKDITLPPPTSASCLT). Catalysis depends on residues Cys-109, His-165, and Gln-185.

It belongs to the Cif family.

It localises to the secreted. The protein resides in the host nucleus. The enzyme catalyses L-glutaminyl-[protein] + H2O = L-glutamyl-[protein] + NH4(+). Its function is as follows. Protein-glutamine deamidase effector that inhibits the host cell cycle and other key cellular processes such as the actin network and programmed-cell death. Acts by mediating the side chain deamidation of 'Gln-40' of host NEDD8, converting it to glutamate, thereby abolishing the activity of cullin-RING-based E3 ubiquitin-protein ligase complexes (CRL complexes). Inactivation of CRL complexes prevents ubiquitination and subsequent degradation of the cyclin-dependent kinase inhibitors CDKN1A/p21 and CDKN1B/p27, leading to G1 and G2 cell cycle arrests in host cells. Also able to catalyze deamidation of 'Gln-40' of host ubiquitin in vitro; however, NEDD8 constitutes the preferred substrate in vivo. In Escherichia coli, this protein is Protein-glutamine deamidase Cif.